Here is a 395-residue protein sequence, read N- to C-terminus: Phosphoglycerate kinase (395 aa).

Residues 22-24, R37, 60-63, R116, and R149 each bind substrate; these read DLN and HFGR. Residues K199, E322, and 352 to 355 contribute to the ATP site; that span reads GGDT.

It belongs to the phosphoglycerate kinase family. As to quaternary structure, monomer.

The protein localises to the cytoplasm. It catalyses the reaction (2R)-3-phosphoglycerate + ATP = (2R)-3-phospho-glyceroyl phosphate + ADP. It participates in carbohydrate degradation; glycolysis; pyruvate from D-glyceraldehyde 3-phosphate: step 2/5. The chain is Phosphoglycerate kinase from Novosphingobium aromaticivorans (strain ATCC 700278 / DSM 12444 / CCUG 56034 / CIP 105152 / NBRC 16084 / F199).